A 330-amino-acid chain; its full sequence is MAFLPSWVCVLVGSFSASLAGTSNLSETEPPLWKESPGQLSDYRVENSMYIINPWVYLERMGMYKIILNQTARYFAKFAPDNEQNILWGLPLQYGWQYRTGRLADPTRRTNCGYESGDHMCISVDSWWADLNYFLSSLPFLAAVDSGVMGISSDQVRLLPPPKNERKFCYDVSSCRSSFPETMNKWNTFYQYLQSPFSKFDDLLKYLWAAHTSTLADNIKSFEDRYDYYSKAEAHFERSWVLAVDHLAAVLFPTTLIRSYKFQKGMPPRILLNTDVAPFISDFTAFQNVVLVLLNMLDNVDKSIGYLCTEKSNVYRDHSESSSRSYGNNS.

Residues 1-20 form the signal peptide; it reads MAFLPSWVCVLVGSFSASLA. Asn-24 and Asn-69 each carry an N-linked (GlcNAc...) asparagine glycan.

This sequence belongs to the LEG1 family. As to expression, detected in saliva and in hypomineralized dental enamel (at protein level).

The protein localises to the secreted. Functionally, may be involved in early liver development. The chain is Protein LEG1 homolog from Homo sapiens (Human).